A 335-amino-acid chain; its full sequence is Beta-ketoacyl-[acyl-carrier-protein] synthase III (335 aa).

Active-site residues include Cys116 and His256. Residues 257-261 (QANLR) are ACP-binding. Residue Asn286 is part of the active site.

Belongs to the thiolase-like superfamily. FabH family. Homodimer.

The protein resides in the cytoplasm. It carries out the reaction malonyl-[ACP] + acetyl-CoA + H(+) = 3-oxobutanoyl-[ACP] + CO2 + CoA. It participates in lipid metabolism; fatty acid biosynthesis. In terms of biological role, catalyzes the condensation reaction of fatty acid synthesis by the addition to an acyl acceptor of two carbons from malonyl-ACP. Catalyzes the first condensation reaction which initiates fatty acid synthesis and may therefore play a role in governing the total rate of fatty acid production. Possesses both acetoacetyl-ACP synthase and acetyl transacylase activities. Its substrate specificity determines the biosynthesis of branched-chain and/or straight-chain of fatty acids. The polypeptide is Beta-ketoacyl-[acyl-carrier-protein] synthase III (Porphyromonas gingivalis (strain ATCC 33277 / DSM 20709 / CIP 103683 / JCM 12257 / NCTC 11834 / 2561)).